We begin with the raw amino-acid sequence, 1205 residues long: Nitric oxide synthase 3 (1205 aa).

Residues methionine 1–valine 73 are disordered. A lipid anchor (N-myristoyl glycine) is attached at glycine 2. Residues cysteine 15 and cysteine 26 are each lipidated (S-palmitoyl cysteine). The span at cysteine 15–glycine 27 shows a compositional bias: gly residues. The span at serine 33–proline 47 shows a compositional bias: pro residues. Residues cysteine 96 and cysteine 101 each coordinate Zn(2+). The tract at residues cysteine 100–lysine 488 is interaction with NOSIP. A (6R)-L-erythro-5,6,7,8-tetrahydrobiopterin-binding site is contributed by serine 104. Serine 116 is subject to Phosphoserine; by CDK5. Cysteine 186 contributes to the heme b binding site. L-arginine-binding residues include glutamine 249, tryptophan 358, tyrosine 359, glutamate 363, and asparagine 368. (6R)-L-erythro-5,6,7,8-tetrahydrobiopterin is bound by residues alanine 448, tryptophan 449, and phenylalanine 462. Position 477 (tyrosine 477) interacts with heme b. The interval isoleucine 492–methionine 512 is calmodulin-binding. Threonine 497 is modified (phosphothreonine; by AMPK and PKA). Residues alanine 522 to phenylalanine 705 enclose the Flavodoxin-like domain. FMN contacts are provided by serine 528, glutamate 529, threonine 530, arginine 532, serine 574, and threonine 575. Phosphoserine occurs at positions 617, 635, and 640. Serine 656, cysteine 663, glutamate 689, and glutamine 693 together coordinate FMN. In terms of domain architecture, FAD-binding FR-type spans arginine 758 to proline 1004. Arginine 778 is a binding site for NADP(+). Residue histidine 800 participates in FAD binding. The interval glutamate 820 to valine 847 is disordered. Residue serine 838 is modified to Phosphoserine. FAD contacts are provided by arginine 940, tyrosine 942, serine 943, threonine 958, alanine 960, tyrosine 964, valine 977, cysteine 978, and serine 979. The NADP(+) site is built by threonine 1018, arginine 1051, serine 1080, arginine 1081, lysine 1087, tyrosine 1089, and glutamine 1091. Threonine 1177 carries the phosphothreonine modification. Serine 1179 is subject to Phosphoserine; by AMPK, PDPK1 and PKA. Serine 1181 is modified (phosphoserine).

It belongs to the NOS family. As to quaternary structure, homodimer. Interacts with NOSIP and NOSTRIN. Interacts with HSP90AB1. Forms a complex with ASL, ASS1 and SLC7A1; the complex regulates cell-autonomous L-arginine synthesis and citrulline recycling while channeling extracellular L-arginine to nitric oxide synthesis pathway. Heme b serves as cofactor. The cofactor is FAD. It depends on FMN as a cofactor. Requires (6R)-L-erythro-5,6,7,8-tetrahydrobiopterin as cofactor. In terms of processing, phosphorylation by AMPK at Ser-1179 in the presence of Ca(2+)-calmodulin (CaM) activates activity. In absence of Ca(2+)-calmodulin, AMPK also phosphorylates Thr-497, resulting in inhibition of activity. Phosphorylation of Ser-116 by CDK5 reduces activity.

The protein resides in the cell membrane. It localises to the membrane. Its subcellular location is the caveola. It is found in the cytoplasm. The protein localises to the cytoskeleton. The protein resides in the golgi apparatus. It catalyses the reaction 2 L-arginine + 3 NADPH + 4 O2 + H(+) = 2 L-citrulline + 2 nitric oxide + 3 NADP(+) + 4 H2O. Its activity is regulated as follows. Stimulated by calcium/calmodulin. Inhibited by NOSIP and NOSTRIN. Functionally, produces nitric oxide (NO) which is implicated in vascular smooth muscle relaxation through a cGMP-mediated signal transduction pathway. NO mediates vascular endothelial growth factor (VEGF)-induced angiogenesis in coronary vessels and promotes blood clotting through the activation of platelets. The protein is Nitric oxide synthase 3 (NOS3) of Bos taurus (Bovine).